The sequence spans 1576 residues: MENILCFLNSYTETGLSPDSHWLDIDPNFICLSGLGLFILYLFYVVLTLYSSPTEKNNDIQKHQGRAKRRRKGGTFKGFPDWKSFQREEEEERKLLSLLKSFGPPVSCSPRGQHHDTNHFRRLLCPDPVCRVCKRATADIQQLLSWESLKDAAPSVSPLASSASATESSFTLASTPSATPPEDLILSPRPKASPPPPLILSPDLITTLADLFSPSPLRDPLPPQPVSPLDSKFPIDHSPPQQLPFPLLPPHHIERVESSLQPEASLSLNTIFSFGSTLCQDISQAMNPIDSCARHHGPPIPSALPPEDCTVTQSKSSLTILKTFPEMLSLGGSGGSSTSAPTIKGIDHSHLASSEFTWWQPHAKDSFSSNFVPSDFMEELLTLHSSEAFLGGHSVANLIEPVNISFLSHDILALLERQVKKRGDFLMWKENGKKPGSFPKQLRPNYQLNSSRNMLTSIAVKHDLAESFPFWASKGKLEWQHIHQQPPHSKCFEDHLEQKYVQLFWGLPSLHSESLHPTVLVQRGHSSMFVFFNGITNTSISHESPVLPPPQPLSLPSTQPLPLPQTLPQGQSPHLTQVKSLAQPQSPFRALLPSPLFLIRICGVCFHRPQNEARSLLPSEINHLEWNVLQKVQESLWGLPSVVQKSQEDFCPPAPNPELVRKSFKVHVPISIIPGDFPLSSEVRKKLEQHIRRRLIQRRWGLPRRIHESLSLLRPQSKISELSVSERIHGPLNISLVEGQRCNVLKKSASSFPRSFHERSSNMLSMENVGNYQGYSQETVPKDHLLHGPETSSDKDLRSNSERDLETHMMHLSGNDSGVRLGQKQLENALTVRLSKKFEEINEGRMPGTVHSSWHSVKQTMSLPEKSHSQIKHRNLVTLVSEDHCVDTSQEISFLSSNKQKMLEAHIKTFRMRMLWGLPLKVLESIEIFKSKADLSTSFSHFDLPSSATFISQGDSKDGVSKSRSRSTFQGEKLGTTSSVPILDRPHPVSSPVVQEGQGTLRRQFSDTDHDLIETDSKDGASTSLRRGTTDFQSEKLDSTSSFPILGHSYLVTSPVNQEKQGTLRREFSDTDNDLTESVRTTEDGRQTFLPPPHSIVDEVSQKQTVLASRCSAELPIMQAGAGCESWDKRKSSFHNVDRLQGSRKTFPVTNALQSQTRNNLTTSKSGSCSLTNVKASTSNETEIFPPRISVPQDPKSSYLKNQMLSQLKLVQRKHSQPQSHFTDMSFALDNLSSKDLLTNSQGISSGDMGTSQVVHVHLEDSGIRVAQKQEPRVPTCVLQKCQVTNFPPAVNRVSPVRPKGGELDGGDAGLGTSQRRRKSLPVHNKTSGEVLGSKSSPTLKTQPPPENLFRKWMKTSLQWFNKPSISYEEQESSWEKGSSLSSCVQNIGRVIRAAFTGTTEAQKIRKDTREFLEEKLGHRHGIDITCPQEPLSFPVGLGKAQHNPEVHVRAEPVQGCPCNYRAPSCKVTRTKSCSQQAIFVGQNYPTRIRQIIDKDRQPQKVEAFKGKILCQSHPQSMPHRKPVPHPNPTCRRQVSLVCPAVPTSAKSPVFSDVPFLTGQKMLPKHLQGGKFPPTK.

The chain crosses the membrane as a helical span at residues 29 to 49 (FICLSGLGLFILYLFYVVLTL). 5 disordered regions span residues 170-197 (FTLA…PPPP), 542-572 (HESP…QGQS), 782-801 (KDHL…RSNS), 952-1033 (SQGD…TDFQ), and 1293-1347 (RVSP…PPPE). Over residues 546–565 (VLPPPQPLSLPSTQPLPLPQ) the composition is skewed to pro residues. Residues 966-980 (RSTFQGEKLGTTSSV) are compositionally biased toward polar residues. Residues 1004–1019 (QFSDTDHDLIETDSKD) are compositionally biased toward basic and acidic residues. A compositionally biased stretch (polar residues) spans 1020 to 1032 (GASTSLRRGTTDF).

This sequence belongs to the SPATA31 family.

The protein localises to the membrane. In terms of biological role, may play a role in spermatogenesis. The polypeptide is Spermatogenesis-associated protein 31D1 (SPATA31D1) (Homo sapiens (Human)).